The primary structure comprises 329 residues: Fructose-1,6-bisphosphatase class 1 (329 aa).

E84, D103, L105, and D106 together coordinate Mg(2+). Substrate contacts are provided by residues 106–109, N196, and K262; that span reads DGSS. Mg(2+) is bound at residue E268.

This sequence belongs to the FBPase class 1 family. Homotetramer. The cofactor is Mg(2+).

Its subcellular location is the cytoplasm. It carries out the reaction beta-D-fructose 1,6-bisphosphate + H2O = beta-D-fructose 6-phosphate + phosphate. It functions in the pathway carbohydrate biosynthesis; gluconeogenesis. The sequence is that of Fructose-1,6-bisphosphatase class 1 from Shewanella woodyi (strain ATCC 51908 / MS32).